Here is a 313-residue protein sequence, read N- to C-terminus: Ribosomal RNA small subunit methyltransferase H (313 aa).

Residues 33 to 35, D53, F82, D103, and Q110 each bind S-adenosyl-L-methionine; that span reads AGH.

This sequence belongs to the methyltransferase superfamily. RsmH family.

The protein resides in the cytoplasm. The catalysed reaction is cytidine(1402) in 16S rRNA + S-adenosyl-L-methionine = N(4)-methylcytidine(1402) in 16S rRNA + S-adenosyl-L-homocysteine + H(+). Specifically methylates the N4 position of cytidine in position 1402 (C1402) of 16S rRNA. The chain is Ribosomal RNA small subunit methyltransferase H from Acetivibrio thermocellus (strain ATCC 27405 / DSM 1237 / JCM 9322 / NBRC 103400 / NCIMB 10682 / NRRL B-4536 / VPI 7372) (Clostridium thermocellum).